We begin with the raw amino-acid sequence, 281 residues long: Shikimate dehydrogenase (NADP(+)) (281 aa).

Shikimate contacts are provided by residues 15-17 (SKS) and threonine 62. The Proton acceptor role is filled by lysine 66. Asparagine 87 and aspartate 102 together coordinate shikimate. Residues 127–131 (GAGGS), 151–156 (NRTPER), and leucine 217 contribute to the NADP(+) site. Shikimate is bound at residue tyrosine 219. Glycine 241 contacts NADP(+).

It belongs to the shikimate dehydrogenase family. In terms of assembly, homodimer.

The enzyme catalyses shikimate + NADP(+) = 3-dehydroshikimate + NADPH + H(+). The protein operates within metabolic intermediate biosynthesis; chorismate biosynthesis; chorismate from D-erythrose 4-phosphate and phosphoenolpyruvate: step 4/7. In terms of biological role, involved in the biosynthesis of the chorismate, which leads to the biosynthesis of aromatic amino acids. Catalyzes the reversible NADPH linked reduction of 3-dehydroshikimate (DHSA) to yield shikimate (SA). In Stenotrophomonas maltophilia (strain K279a), this protein is Shikimate dehydrogenase (NADP(+)).